We begin with the raw amino-acid sequence, 145 residues long: Large-conductance mechanosensitive channel (145 aa).

Helical transmembrane passes span 30–50 and 74–94; these read VAVV…AWLM and GELV…FLII.

This sequence belongs to the MscL family. In terms of assembly, homopentamer.

The protein resides in the cell inner membrane. In terms of biological role, channel that opens in response to stretch forces in the membrane lipid bilayer. May participate in the regulation of osmotic pressure changes within the cell. This chain is Large-conductance mechanosensitive channel, found in Synechocystis sp. (strain ATCC 27184 / PCC 6803 / Kazusa).